Reading from the N-terminus, the 99-residue chain is Sarcosine oxidase subunit delta (99 aa).

Zn(2+) contacts are provided by Cys6, Cys9, His59, and Cys63.

The protein belongs to the SoxD family. As to quaternary structure, heterotetramer composed of subunits alpha (SoxA), beta (SoxB), gamma (SoxG) and delta (SoxD).

The protein localises to the cytoplasm. The catalysed reaction is sarcosine + (6S)-5,6,7,8-tetrahydrofolate + O2 = (6R)-5,10-methylene-5,6,7,8-tetrahydrofolate + glycine + H2O2. It catalyses the reaction sarcosine + O2 + H2O = formaldehyde + glycine + H2O2. Its activity is regulated as follows. Inhibited by Zn(2+), Cu(2+), Cd(2+), Hg(2+), Ag(+), p-chloromercuribenzoate (p-CMB), iodoacetamide, N-ethylmaleimide, CN(-), o-phenanthroline and sodium lauryl sulfate. Its function is as follows. In the presence of tetrahydrofolate, catalyzes the oxidative demethylation of sarcosine to yield glycine, 5,10-methylenetetrahydrofolate and hydrogen peroxide. In the absence of tetrahydrofolate, catalyzes the oxidative demethylation of sarcosine to yield glycine, formaldehyde and hydrogen peroxide. Can also use N-methyl-L-alanine and N-ethyl-L-glycine. Is very specific for oxygen as an acceptor. This is Sarcosine oxidase subunit delta from Corynebacterium sp. (strain U-96).